Reading from the N-terminus, the 541-residue chain is Transcription factor STP2 (541 aa).

Residues 13 to 32 (VLTRIYDYLKALVQQVIVPN) form an i region. The disordered stretch occupies residues 35 to 58 (DDKSSKSTPFEKLEPAKQNHPQKD). The II stretch occupies residues 73–105 (LFPKQNNKQLSLTSKSSVVPCALNLDNLETPFS). The C2H2-type 1 zinc finger occupies 204–226 (YICHYCDARFRIRGYLTRHIKKH). The segment at 232–267 (YHCPFFDNSISQELRCHTSGGFSRRDTYKTHLKSRH) adopts a C2H2-type 2; atypical zinc-finger fold. The C2H2-type 3; atypical zinc finger occupies 284 to 309 (GVCTQCGEHFSTSESWVENHIEAGSC). The span at 452 to 462 (SSASSALSPLS) shows a compositional bias: low complexity. Residues 452 to 497 (SSASSALSPLSGDPITTTETNKSYPLDSEQSLLEPDKTEEDAINQS) form a disordered region. The segment covering 465–482 (PITTTETNKSYPLDSEQS) has biased composition (polar residues).

As to quaternary structure, interacts (via Region II) with SSY5; protease component of the SPS-sensor. Post-translationally, activated by the amino acid-induced proteolytic removal of an N-terminal inhibitory domain by serine protease SSY5, an intrinsic component of the SPS-sensor. Processing requires at least 2 components of the SCF(GRR1) ubiquitin ligase complex, namely the F-box protein GRR1 and the E2 enzyme CDC34, but does not depend on the proteasome. Processing is negatively regulated by the protein phosphatase 2A regulatory subunit RTS1.

The protein localises to the cell membrane. Its subcellular location is the nucleus. In terms of biological role, transcription factor involved in the regulation of gene expression in response to extracellular amino acid levels. Synthesized as latent cytoplasmic precursor, which, upon a signal initiated by the plasma membrane SPS (SSY1-PTR3-SSY5) amino acid sensor system, becomes proteolytically activated and relocates to the nucleus, where it induces the expression of SPS-sensor-regulated genes, including the amino-acid permeases BAP2 and BAP3. Binding to promoters is facilitated by DAL81. Involved in the repression of genes subject to nitrogen catabolite repression and genes involved in stress response. Negatively regulated by inner nuclear membrane proteins ASI1, ASI2 and ASI3, which prevent unprocessed precursor forms that escape cytoplasmic anchoring from inducing SPS-sensor-regulated genes. The sequence is that of Transcription factor STP2 (STP2) from Saccharomyces cerevisiae (strain ATCC 204508 / S288c) (Baker's yeast).